Reading from the N-terminus, the 247-residue chain is MYKWNLPYRKDDVETGREGGERSLYPTMLESPELRWGFIRKVYSIIAFQLLATIAVASTVVFVRPIAVFFATTSAGLALWIVLIITPLIVMCPLYYYHQKHPVNYLLLGIFTVALAFAVGLTCAFTSGKVILEAAILTTVVVLSLTVYTFWAAKKGYDFNFLGPFLFGALIVLMVFALIQIFFPLGRISVMIYGCLAAIIFCGYIVYDTDNLIKRYSYDEYIWAAVSLYLDIINLFLALLTIFRAAE.

Transmembrane regions (helical) follow at residues 42–62 (VYSIIAFQLLATIAVASTVVF), 75–95 (AGLALWIVLIITPLIVMCPLY), 105–125 (YLLLGIFTVALAFAVGLTCAF), 130–150 (VILEAAILTTVVVLSLTVYTF), 165–185 (FLFGALIVLMVFALIQIFFPL), 188–208 (ISVMIYGCLAAIIFCGYIVYD), and 222–242 (IWAAVSLYLDIINLFLALLTI).

It belongs to the BI1 family.

It localises to the membrane. This chain is Protein LIFEGUARD 4, found in Arabidopsis thaliana (Mouse-ear cress).